We begin with the raw amino-acid sequence, 493 residues long: Isoniazid-induced protein IniC (493 aa).

This Mycobacterium tuberculosis (strain CDC 1551 / Oshkosh) protein is Isoniazid-induced protein IniC (iniC).